Consider the following 225-residue polypeptide: Late embryogenesis abundant protein 29 (225 aa).

Disordered stretches follow at residues 1–167 and 193–225; these read MASN…GGFL and TEEE…YQRK. Basic and acidic residues-rich tracts occupy residues 28–39, 49–61, 71–83, and 93–119; these read MRDKAEEGRDKT, KAHE…KDKT, KAHE…KEKT, and KAHE…KDKA. 3 LEA 11-mer repeat repeats span residues 53–63, 75–85, and 97–107; these read TAQSAKDKTSQ, TAQSAKEKTSQ, and TTQAAKEKTSQ. The segment covering 141-153 has biased composition (polar residues); that stretch reads TKETAQGAAQYTK. Basic and acidic residues predominate over residues 154–163; it reads ETAEAGRDKT. Positions 205–225 are enriched in low complexity; sequence TTTTTATTRTTDPTHQTYQRK.

The protein belongs to the LEA type 4 family.

It localises to the cytoplasm. It is found in the cytosol. In terms of biological role, involved dehydration tolerance. This Arabidopsis thaliana (Mouse-ear cress) protein is Late embryogenesis abundant protein 29.